Consider the following 405-residue polypeptide: Arginine biosynthesis bifunctional protein ArgJ (405 aa).

Residues T152, K178, T189, E276, N400, and T405 each contribute to the substrate site. The Nucleophile role is filled by T189.

This sequence belongs to the ArgJ family. Heterotetramer of two alpha and two beta chains.

It localises to the cytoplasm. It catalyses the reaction N(2)-acetyl-L-ornithine + L-glutamate = N-acetyl-L-glutamate + L-ornithine. It carries out the reaction L-glutamate + acetyl-CoA = N-acetyl-L-glutamate + CoA + H(+). It functions in the pathway amino-acid biosynthesis; L-arginine biosynthesis; L-ornithine and N-acetyl-L-glutamate from L-glutamate and N(2)-acetyl-L-ornithine (cyclic): step 1/1. Its pathway is amino-acid biosynthesis; L-arginine biosynthesis; N(2)-acetyl-L-ornithine from L-glutamate: step 1/4. Catalyzes two activities which are involved in the cyclic version of arginine biosynthesis: the synthesis of N-acetylglutamate from glutamate and acetyl-CoA as the acetyl donor, and of ornithine by transacetylation between N(2)-acetylornithine and glutamate. This chain is Arginine biosynthesis bifunctional protein ArgJ, found in Pseudomonas aeruginosa (strain ATCC 15692 / DSM 22644 / CIP 104116 / JCM 14847 / LMG 12228 / 1C / PRS 101 / PAO1).